A 205-amino-acid polypeptide reads, in one-letter code: Holliday junction branch migration complex subunit RuvA (205 aa).

The tract at residues 1 to 62 (MFEYVTGYVE…EDIMALYGFK (62 aa)) is domain I. A domain II region spans residues 63 to 141 (TREERLLFTK…DVVPDAFVDL (79 aa)). The flexible linker stretch occupies residues 142-152 (FSDEERFDEKK). The tract at residues 153 to 205 (GSSAELDEALEALRALGYAEREVSRVVPELLKESLTTDQYIKKALSLLLNGKR) is domain III.

Belongs to the RuvA family. In terms of assembly, homotetramer. Forms an RuvA(8)-RuvB(12)-Holliday junction (HJ) complex. HJ DNA is sandwiched between 2 RuvA tetramers; dsDNA enters through RuvA and exits via RuvB. An RuvB hexamer assembles on each DNA strand where it exits the tetramer. Each RuvB hexamer is contacted by two RuvA subunits (via domain III) on 2 adjacent RuvB subunits; this complex drives branch migration. In the full resolvosome a probable DNA-RuvA(4)-RuvB(12)-RuvC(2) complex forms which resolves the HJ.

The protein resides in the cytoplasm. The RuvA-RuvB-RuvC complex processes Holliday junction (HJ) DNA during genetic recombination and DNA repair, while the RuvA-RuvB complex plays an important role in the rescue of blocked DNA replication forks via replication fork reversal (RFR). RuvA specifically binds to HJ cruciform DNA, conferring on it an open structure. The RuvB hexamer acts as an ATP-dependent pump, pulling dsDNA into and through the RuvAB complex. HJ branch migration allows RuvC to scan DNA until it finds its consensus sequence, where it cleaves and resolves the cruciform DNA. In Bacillus cereus (strain AH187), this protein is Holliday junction branch migration complex subunit RuvA.